A 160-amino-acid chain; its full sequence is Large ribosomal subunit protein uL10 (160 aa).

This sequence belongs to the universal ribosomal protein uL10 family. As to quaternary structure, part of the ribosomal stalk of the 50S ribosomal subunit. The N-terminus interacts with L11 and the large rRNA to form the base of the stalk. The C-terminus forms an elongated spine to which L12 dimers bind in a sequential fashion forming a multimeric L10(L12)X complex.

Functionally, forms part of the ribosomal stalk, playing a central role in the interaction of the ribosome with GTP-bound translation factors. This is Large ribosomal subunit protein uL10 from Wolinella succinogenes (strain ATCC 29543 / DSM 1740 / CCUG 13145 / JCM 31913 / LMG 7466 / NCTC 11488 / FDC 602W) (Vibrio succinogenes).